Reading from the N-terminus, the 396-residue chain is Arginine biosynthesis bifunctional protein ArgJ (396 aa).

The substrate site is built by T147, K173, T184, E270, N391, and S396. The active-site Nucleophile is T184.

It belongs to the ArgJ family. In terms of assembly, heterotetramer of two alpha and two beta chains.

Its subcellular location is the cytoplasm. It catalyses the reaction N(2)-acetyl-L-ornithine + L-glutamate = N-acetyl-L-glutamate + L-ornithine. The enzyme catalyses L-glutamate + acetyl-CoA = N-acetyl-L-glutamate + CoA + H(+). It participates in amino-acid biosynthesis; L-arginine biosynthesis; L-ornithine and N-acetyl-L-glutamate from L-glutamate and N(2)-acetyl-L-ornithine (cyclic): step 1/1. Its pathway is amino-acid biosynthesis; L-arginine biosynthesis; N(2)-acetyl-L-ornithine from L-glutamate: step 1/4. Functionally, catalyzes two activities which are involved in the cyclic version of arginine biosynthesis: the synthesis of N-acetylglutamate from glutamate and acetyl-CoA as the acetyl donor, and of ornithine by transacetylation between N(2)-acetylornithine and glutamate. In Lactococcus lactis subsp. lactis (strain IL1403) (Streptococcus lactis), this protein is Arginine biosynthesis bifunctional protein ArgJ.